The following is a 519-amino-acid chain: Alternative NAD(P)H-ubiquinone oxidoreductase C1, chloroplastic/mitochondrial (519 aa).

Residues 1 to 52 (MAVLSSVSSLIPFSYGATRLTSKASLASRTSGFNLSSRWNSTRNSPMLYLSR) constitute a chloroplast and mitochondrion transit peptide. 82 to 118 (RVCILGGGFGGLYTALRLESLVWPEDKKPQVVLVDQS) contacts FAD. 246–282 (IKVAVVGCGYAGVELAATISERLQDRGIVQSINVSKN) contributes to the NAD(+) binding site.

The protein belongs to the NADH dehydrogenase family. FAD serves as cofactor. Flowers, roots, leaves and stems.

It localises to the mitochondrion. The protein localises to the mitochondrion inner membrane. The protein resides in the plastid. It is found in the chloroplast. Its subcellular location is the plastoglobule. It catalyses the reaction a quinone + NADH + H(+) = a quinol + NAD(+). The enzyme catalyses a ubiquinone + NADH + H(+) = a ubiquinol + NAD(+). The catalysed reaction is demethylphylloquinone + NADPH + H(+) = demethylphylloquinol + NADP(+). With respect to regulation, inhibited by dicumarol. In terms of biological role, bifunctional oxidoreductase ables to act both on prenyl naphthoquinones and on prenyl benzoquinones. May serve a respiratory function. Involved in an electron flow toward the plastoglobule plastoquinone pool. Required for plastochromanol-8 accumulation and for phylloquinone (vitamin K1) production. Probably not directly involved in cyclic or chlororespiratory electron flows under standard growth conditions, but participates in the redox metabolism of plastoquinone-9 and the tocophrol recycling-intermediate alpha-tocopherol quinone. Catalyzes the penultimate step in the biosynthesis of vitamin K1. This chain is Alternative NAD(P)H-ubiquinone oxidoreductase C1, chloroplastic/mitochondrial, found in Arabidopsis thaliana (Mouse-ear cress).